The chain runs to 631 residues: Glutathione S-transferase C-terminal domain-containing protein (631 aa).

The GST C-terminal domain occupies 128 to 330; that stretch reads LGFKKTCLKA…QEVPRVQTAA (203 aa). Disordered stretches follow at residues 188 to 233 and 345 to 373; these read HNDD…SSSA and TTSS…GGPR. A compositionally biased stretch (basic and acidic residues) spans 211-224; the sequence is AKEKTKSKGHRQET. S231 is modified (phosphoserine).

Belongs to the GSTCD family.

The protein localises to the cytoplasm. The polypeptide is Glutathione S-transferase C-terminal domain-containing protein (GSTCD) (Bos taurus (Bovine)).